Consider the following 700-residue polypeptide: Acyl-coenzyme A oxidase 3 (700 aa).

The protein belongs to the acyl-CoA oxidase family. As to quaternary structure, heteropentamer composed of five different subunits. It depends on FAD as a cofactor.

The protein resides in the peroxisome. It carries out the reaction a 2,3-saturated acyl-CoA + O2 = a (2E)-enoyl-CoA + H2O2. It participates in lipid metabolism; peroxisomal fatty acid beta-oxidation. Its function is as follows. Oxidizes aliphatic acyl-CoA substrates of different chain lengths such as hexanoyl-CoA, decanoyl-CoA and myristoyl-CoA as well as aromatic/heterocyclic ring-substituted chromogenic substrates, such as furylpropionyl-CoA. Of the above substrates, the efficiency of the enzyme, exhibits the following order: decanoyl-CoA &gt; myristoyl-CoA &gt; hexanoyl-CoA &gt; furyl-propionyl-CoA. In Yarrowia lipolytica (strain CLIB 122 / E 150) (Yeast), this protein is Acyl-coenzyme A oxidase 3 (POX3).